The following is a 273-amino-acid chain: MDFLIVLKALMMGLVEGFTEFLPISSTGHLIVFGNLIDFHSNHKVFEITIQLGAVLAVVFEYRQRFSNVLHGVGKDRKANRFVLNLAIAFIPAAVMGLLFGKQIKEYLFNPLSVAVMLVLGGFFILWVEKRQSRAEPKIVDVDALRPIDALMIGVAQVFALVPGTSRSGSTIMGGMLWGIERKTATEFSFFLAVPMMVAATAYDVLKHYRFFTLHDVGLILIGFVAAFVSGLVAVKALLRFVSKKNYIPFAYYRIVFGIAIIILWLSGWISWE.

Helical transmembrane passes span 13–35 (GLVEGFTEFLPISSTGHLIVFGN), 45–62 (VFEITIQLGAVLAVVFEY), 82–102 (FVLNLAIAFIPAAVMGLLFGK), 108–128 (LFNPLSVAVMLVLGGFFILWV), 186–206 (TEFSFFLAVPMMVAATAYDVL), 219–239 (LILIGFVAAFVSGLVAVKALL), and 250–270 (FAYYRIVFGIAIIILWLSGWI).

The protein belongs to the UppP family.

It is found in the cell inner membrane. It carries out the reaction di-trans,octa-cis-undecaprenyl diphosphate + H2O = di-trans,octa-cis-undecaprenyl phosphate + phosphate + H(+). Functionally, catalyzes the dephosphorylation of undecaprenyl diphosphate (UPP). Confers resistance to bacitracin. In Neisseria meningitidis serogroup A / serotype 4A (strain DSM 15465 / Z2491), this protein is Undecaprenyl-diphosphatase.